We begin with the raw amino-acid sequence, 171 residues long: Photosystem I assembly protein Ycf3 (171 aa).

3 TPR repeats span residues 35 to 68 (AFTY…EVDA), 72 to 105 (SYIL…NPYL), and 120 to 153 (GEQA…APTN).

The protein belongs to the Ycf3 family.

The protein localises to the plastid. The protein resides in the chloroplast thylakoid membrane. Functionally, essential for the assembly of the photosystem I (PSI) complex. May act as a chaperone-like factor to guide the assembly of the PSI subunits. In Nephroselmis olivacea (Green alga), this protein is Photosystem I assembly protein Ycf3.